We begin with the raw amino-acid sequence, 634 residues long: ATP-dependent clpX-like chaperone, mitochondrial (634 aa).

Residues 1–56 constitute a mitochondrion transit peptide; sequence MSSCGACTCGAAAARLLTTSLTSAQRGISCGRIHVPVLGRLGTTLDAQALRRAPLR. The segment at 69-102 is disordered; sequence DGANKDGSGDGNKKSVTEGSSKKSGSGNSGKGGN. Residues 70 to 84 are compositionally biased toward basic and acidic residues; the sequence is GANKDGSGDGNKKSV. Residues 85–94 show a composition bias toward low complexity; the sequence is TEGSSKKSGS. The ClpX-type ZB domain maps to 94-147; that stretch reads SGNSGKGGNQLRCPKCGDLCTHVETFVSSTRFVKCEKCHHFFVVLSEADSKKSI. Zn(2+) contacts are provided by Cys106, Cys109, Cys128, and Cys131. 295–302 contacts ATP; that stretch reads PTGSGKTL. Position 438 is an N6-acetyllysine (Lys438). A compositionally biased stretch (basic and acidic residues) spans 599-611; that stretch reads KEPGYIRAPSKES. The tract at residues 599–634 is disordered; that stretch reads KEPGYIRAPSKESSEEEYDSGVEEDGWPRQADAANS. Over residues 612-623 the composition is skewed to acidic residues; it reads SEEEYDSGVEED. At Ser618 the chain carries Phosphoserine.

The protein belongs to the ClpX chaperone family. As to quaternary structure, homohexamer that forms a ring structure; this hexamerization requires ATP binding. Component of the ClpXP complex formed by the assembly of two CLPP heptameric rings with two CLPX hexameric rings, giving rise to a symmetrical structure with two central CLPP rings flanked by a CLPX ring at either end of the complex. Interacts with TFAM. Detected in liver (at protein level).

It is found in the mitochondrion. Its subcellular location is the mitochondrion matrix. It localises to the mitochondrion nucleoid. The enzyme catalyses ATP + H2O = ADP + phosphate + H(+). Its function is as follows. ATP-dependent chaperone that functions as an unfoldase. As part of the ClpXP protease complex, it recognizes specific protein substrates, unfolds them using energy derived from ATP hydrolysis, and then translocates them to the proteolytic subunit (CLPP) of the ClpXP complex for degradation. Thanks to its chaperone activity, it also functions in the incorporation of the pyridoxal phosphate cofactor into 5-aminolevulinate synthase, thereby activating 5-aminolevulinate (ALA) synthesis, the first step in heme biosynthesis. This chaperone is also involved in the control of mtDNA nucleoid distribution, by regulating mitochondrial transcription factor A (TFAM) activity. The polypeptide is ATP-dependent clpX-like chaperone, mitochondrial (Mus musculus (Mouse)).